Consider the following 902-residue polypeptide: Protein translocase subunit SecA (902 aa).

ATP is bound by residues Gln85, 103–107, and Asp492; that span reads GEGKT. The tract at residues 846 to 902 is disordered; it reads LSYSGGGEEPNQRPKSPRRRSERKIGPNEPCPCGSGKKFKKCHGRVGAPPLPTSQSQ. Cys876, Cys878, Cys887, and His888 together coordinate Zn(2+).

Belongs to the SecA family. As to quaternary structure, monomer and homodimer. Part of the essential Sec protein translocation apparatus which comprises SecA, SecYEG and auxiliary proteins SecDF. Other proteins may also be involved. Zn(2+) is required as a cofactor.

The protein localises to the cell membrane. It localises to the cytoplasm. The enzyme catalyses ATP + H2O + cellular proteinSide 1 = ADP + phosphate + cellular proteinSide 2.. Its function is as follows. Part of the Sec protein translocase complex. Interacts with the SecYEG preprotein conducting channel. Has a central role in coupling the hydrolysis of ATP to the transfer of proteins into and across the cell membrane, serving as an ATP-driven molecular motor driving the stepwise translocation of polypeptide chains across the membrane. The protein is Protein translocase subunit SecA of Rubrobacter xylanophilus (strain DSM 9941 / JCM 11954 / NBRC 16129 / PRD-1).